We begin with the raw amino-acid sequence, 125 residues long: Fluoride-specific ion channel FluC (125 aa).

The next 4 membrane-spanning stretches (helical) occupy residues Ile4 to Trp24, Ala32 to Ala52, Phe68 to Ile88, and Leu100 to Leu120. The Na(+) site is built by Gly75 and Thr78.

Belongs to the fluoride channel Fluc/FEX (TC 1.A.43) family.

The protein localises to the cell inner membrane. It catalyses the reaction fluoride(in) = fluoride(out). Its activity is regulated as follows. Na(+) is not transported, but it plays an essential structural role and its presence is essential for fluoride channel function. Fluoride-specific ion channel. Important for reducing fluoride concentration in the cell, thus reducing its toxicity. In Rhizobium meliloti (strain 1021) (Ensifer meliloti), this protein is Fluoride-specific ion channel FluC.